We begin with the raw amino-acid sequence, 612 residues long: Dihydroxy-acid dehydratase (612 aa).

Asp81 is a Mg(2+) binding site. Cys122 serves as a coordination point for [2Fe-2S] cluster. Mg(2+) contacts are provided by Asp123 and Lys124. Position 124 is an N6-carboxylysine (Lys124). A [2Fe-2S] cluster-binding site is contributed by Cys195. Glu491 lines the Mg(2+) pocket. Ser517 serves as the catalytic Proton acceptor.

The protein belongs to the IlvD/Edd family. Homodimer. It depends on [2Fe-2S] cluster as a cofactor. Mg(2+) is required as a cofactor.

The catalysed reaction is (2R)-2,3-dihydroxy-3-methylbutanoate = 3-methyl-2-oxobutanoate + H2O. It carries out the reaction (2R,3R)-2,3-dihydroxy-3-methylpentanoate = (S)-3-methyl-2-oxopentanoate + H2O. Its pathway is amino-acid biosynthesis; L-isoleucine biosynthesis; L-isoleucine from 2-oxobutanoate: step 3/4. It functions in the pathway amino-acid biosynthesis; L-valine biosynthesis; L-valine from pyruvate: step 3/4. Its function is as follows. Functions in the biosynthesis of branched-chain amino acids. Catalyzes the dehydration of (2R,3R)-2,3-dihydroxy-3-methylpentanoate (2,3-dihydroxy-3-methylvalerate) into 2-oxo-3-methylpentanoate (2-oxo-3-methylvalerate) and of (2R)-2,3-dihydroxy-3-methylbutanoate (2,3-dihydroxyisovalerate) into 2-oxo-3-methylbutanoate (2-oxoisovalerate), the penultimate precursor to L-isoleucine and L-valine, respectively. The polypeptide is Dihydroxy-acid dehydratase (Rhizobium etli (strain CIAT 652)).